The primary structure comprises 194 residues: MESKSSSSSLPLFALFNFFLISFCRWVSSTRIFLSRFVPLLQHHQRVFDKKNNKDQQETLTKQEDDDDDDDDDDDDDDDDIDISREEAEMVMRSLGLFYNDDQLQEQYSAKEVSSLFEEKEASLEEVKQAFDVFDENKDGFIDAIELQRVLTILGFKQGSYLDNCLVMIRSLDGNKDGKIDFNEFVKFMETSFY.

Residues asparagine 52–glutamine 63 are compositionally biased toward basic and acidic residues. Positions asparagine 52–isoleucine 81 are disordered. The segment covering glutamate 64–isoleucine 81 has biased composition (acidic residues). 3 consecutive EF-hand domains span residues aspartate 76 to phenylalanine 98, alanine 122 to lysine 157, and serine 160 to tyrosine 194. Aspartate 135, asparagine 137, aspartate 139, glutamate 146, aspartate 173, asparagine 175, aspartate 177, lysine 179, and glutamate 184 together coordinate Ca(2+).

In terms of biological role, potential calcium sensor. In Arabidopsis thaliana (Mouse-ear cress), this protein is Probable calcium-binding protein CML45.